A 900-amino-acid polypeptide reads, in one-letter code: Peroxisomal hydratase-dehydrogenase-epimerase (900 aa).

Short-chain dehydrogenase like stretches follow at residues 6–230 (SFKD…THES) and 319–535 (SLCN…ASEE). Residues Ile14, Lys53, Asn100, Arg133, Tyr165, and Lys169 each contribute to the NADP(+) site. Tyr165 serves as the catalytic Proton donor. Lys169 (lowers pKa of active site Tyr) is an active-site residue. Residues His689, Gly690, Lys719, Asp803, Asn805, Gly826, Phe851, and Thr852 each coordinate (3R)-3-hydroxydecanoyl-CoA. The region spanning 775 to 887 (EVPHGKVPDF…DTTRNVIVLD (113 aa)) is the MaoC-like domain. Positions 898–900 (SKL) match the Microbody targeting signal motif.

The protein belongs to the short-chain dehydrogenases/reductases (SDR) family. In terms of assembly, monomer.

The protein localises to the peroxisome. The catalysed reaction is a (3R)-3-hydroxyacyl-CoA = a (2E)-enoyl-CoA + H2O. It carries out the reaction a (3R)-3-hydroxyacyl-CoA + NAD(+) = a 3-oxoacyl-CoA + NADH + H(+). The protein operates within lipid metabolism; fatty acid beta-oxidation. Second trifunctional enzyme acting on the beta-oxidation pathway for fatty acids, possessing hydratase-dehydrogenase-epimerase activities. Converts trans-2-enoyl-CoA via D-3-hydroxyacyl-CoA to 3-ketoacyl-CoA. This chain is Peroxisomal hydratase-dehydrogenase-epimerase (FOX2), found in Saccharomyces cerevisiae (strain ATCC 204508 / S288c) (Baker's yeast).